We begin with the raw amino-acid sequence, 692 residues long: Elongation factor G (692 aa).

One can recognise a tr-type G domain in the interval 8–282 (ENTRNIGIMA…AVIDYLPSPV (275 aa)). Residues 17 to 24 (AHIDAGKT), 81 to 85 (DTPGH), and 135 to 138 (NKMD) each bind GTP.

It belongs to the TRAFAC class translation factor GTPase superfamily. Classic translation factor GTPase family. EF-G/EF-2 subfamily.

It is found in the cytoplasm. Functionally, catalyzes the GTP-dependent ribosomal translocation step during translation elongation. During this step, the ribosome changes from the pre-translocational (PRE) to the post-translocational (POST) state as the newly formed A-site-bound peptidyl-tRNA and P-site-bound deacylated tRNA move to the P and E sites, respectively. Catalyzes the coordinated movement of the two tRNA molecules, the mRNA and conformational changes in the ribosome. The chain is Elongation factor G from Lysinibacillus sphaericus (strain C3-41).